The sequence spans 114 residues: Iron-sulfur cluster insertion protein ErpA (114 aa).

Residues cysteine 42, cysteine 106, and cysteine 108 each contribute to the iron-sulfur cluster site.

It belongs to the HesB/IscA family. Homodimer. The cofactor is iron-sulfur cluster.

In terms of biological role, required for insertion of 4Fe-4S clusters for at least IspG. The protein is Iron-sulfur cluster insertion protein ErpA of Wigglesworthia glossinidia brevipalpis.